A 383-amino-acid chain; its full sequence is ATP phosphoribosyltransferase regulatory subunit (383 aa).

The protein belongs to the class-II aminoacyl-tRNA synthetase family. HisZ subfamily. Heteromultimer composed of HisG and HisZ subunits.

It is found in the cytoplasm. The protein operates within amino-acid biosynthesis; L-histidine biosynthesis; L-histidine from 5-phospho-alpha-D-ribose 1-diphosphate: step 1/9. Its function is as follows. Required for the first step of histidine biosynthesis. May allow the feedback regulation of ATP phosphoribosyltransferase activity by histidine. The sequence is that of ATP phosphoribosyltransferase regulatory subunit from Desulfitobacterium hafniense (strain Y51).